The sequence spans 229 residues: Heptaprenylglyceryl phosphate synthase (229 aa).

K12 serves as a coordination point for sn-glycerol 1-phosphate. Mg(2+) is bound by residues D14 and S40. Sn-glycerol 1-phosphate-binding positions include 159–164 (YLEYSG), G189, and 209–210 (GN).

Belongs to the GGGP/HepGP synthase family. Group I subfamily. As to quaternary structure, homodimer. Requires Mg(2+) as cofactor.

It catalyses the reaction sn-glycerol 1-phosphate + all-trans-heptaprenyl diphosphate = 3-heptaprenyl-sn-glycero-1-phosphate + diphosphate. The protein operates within membrane lipid metabolism; glycerophospholipid metabolism. Prenyltransferase that catalyzes in vivo the transfer of the heptaprenyl moiety of heptaprenyl pyrophosphate (HepPP; 35 carbon atoms) to the C3 hydroxyl of sn-glycerol-1-phosphate (G1P), producing heptaprenylglyceryl phosphate (HepGP). This reaction is an ether-bond-formation step in the biosynthesis of archaea-type G1P-based membrane lipids found in Bacillales. The polypeptide is Heptaprenylglyceryl phosphate synthase (Bacillus cereus (strain ZK / E33L)).